Consider the following 321-residue polypeptide: Transmembrane protein fend (321 aa).

Residues 1–18 (MFHSLVLMACALAALSVA) form the signal peptide. Residues 19–261 (QGAGSARSKS…ALPTPSELGG (243 aa)) lie on the Extracellular side of the membrane. The helical transmembrane segment at 262–282 (VVYPAFGALAFFLALLVMFLF) threads the bilayer. Over 283-321 (LRPQRKRFPLDADSADTATLIGRSSSSSRNSMDASTLHV) the chain is Cytoplasmic.

Its subcellular location is the membrane. Functionally, involved in the normal targeting of ventral muscle, muscle 12, by motoneurons. May function as an axon guidance molecule involved in neuromuscular specificity. This is Transmembrane protein fend (fend) from Drosophila melanogaster (Fruit fly).